A 174-amino-acid chain; its full sequence is Early E1A protein (174 aa).

An interaction with RB1 in competition with E2F1 region spans residues 40-48 (PSLHDLFDL). Residues 106-110 (LLCLE) carry the LXCXE motif, interaction with host RB1 motif. The segment at 145 to 163 (CLRCAYYQEQGENSICGLC) is a zinc-finger region.

This sequence belongs to the adenoviridae E1A protein family. In terms of assembly, interacts with host UBE2I; this interaction interferes with polySUMOylation. Interacts with host RB1; this interaction induces the aberrant dissociation of RB1-E2F1 complex thereby disrupting the activity of RB1 and activating E2F1-regulated genes. Interacts with host ATF7; the interaction enhances ATF7-mediated viral transactivation activity which requires the zinc binding domains of both proteins. Isoform early E1A 32 kDa protein and isoform early E1A 26 kDa protein interact (via N-terminus) with CUL1 and E3 ubiquitin ligase RBX1; these interactions inhibit RBX1-CUL1-dependent elongation reaction of ubiquitin chains and attenuate ubiquitination of SCF(FBXW7) target proteins. Interacts (via PXLXP motif) with host ZMYND11/BS69 (via MYND-type zinc finger); this interaction inhibits E1A mediated transactivation. Interacts with host EP300; this interaction stimulates the acetylation of RB1 by recruiting EP300 and RB1 into a multimeric-protein complex. Interacts with host CTBP1 and CTBP2; this interaction seems to potentiate viral replication. Interacts with host DCAF7. Interacts with host DYRK1A. Interacts with host KPNA4; this interaction allows E1A import into the host nucleus. Interacts with host EP400; this interaction stabilizes MYC. Interacts with host TBP protein; this interaction probably disrupts the TBP-TATA complex.

Its subcellular location is the host nucleus. In terms of biological role, plays a role in viral genome replication by driving entry of quiescent cells into the cell cycle. Stimulation of progression from G1 to S phase allows the virus to efficiently use the cellular DNA replicating machinery to achieve viral genome replication. E1A protein has both transforming and trans-activating activities. Induces the disassembly of the E2F1 transcription factor from RB1 by direct competition for the same binding site on RB1, with subsequent transcriptional activation of E2F1-regulated S-phase genes and of the E2 region of the adenoviral genome. Release of E2F1 leads to the ARF-mediated inhibition of MDM2 and causes TP53/p53 to accumulate because it is not targeted for degradation by MDM2-mediated ubiquitination anymore. This increase in TP53, in turn, would arrest the cell proliferation and direct its death but this effect is counteracted by the viral protein E1B-55K. Inactivation of the ability of RB1 to arrest the cell cycle is critical for cellular transformation, uncontrolled cellular growth and proliferation induced by viral infection. Interaction with RBX1 and CUL1 inhibits ubiquitination of the proteins targeted by SCF(FBXW7) ubiquitin ligase complex, and may be linked to unregulated host cell proliferation. The tumorigenesis-restraining activity of E1A may be related to the disruption of the host CtBP-CtIP complex through the CtBP binding motif. The sequence is that of Early E1A protein from Canine adenovirus serotype 1 (strain RI261) (CAdV-1).